Here is a 577-residue protein sequence, read N- to C-terminus: Myb-like protein N (577 aa).

Disordered regions lie at residues 1-23, 206-225, and 240-264; these read MMTI…NIYT, TPFS…SPLN, and SSSS…LSSS. The span at 213 to 225 shows a compositional bias: low complexity; sequence PNSPNSTSSSPLN. 2 HTH myb-type domains span residues 403–465 and 466–517; these read KKST…CPAI and RKGS…SREV. 2 DNA-binding regions (H-T-H motif) span residues 437–461 and 489–513; these read WKKI…KRVL and WKNV…KSCM. The 53-residue stretch at 518–570 folds into the Myb-like domain; the sequence is PWTPKEDEILQKKVIENKQDSTKEIGWMDLSKAMARARQTKIPRTALECKIRF.

The protein resides in the nucleus. In Dictyostelium discoideum (Social amoeba), this protein is Myb-like protein N (mybN).